A 390-amino-acid chain; its full sequence is S-adenosylmethionine synthase 2 (390 aa).

E9 contacts Mg(2+). H15 is a binding site for ATP. Residue E43 coordinates K(+). Residues E56 and Q99 each coordinate L-methionine. ATP is bound by residues 167 to 169 (DGK), 235 to 238 (SGRF), D246, 252 to 253 (RK), A269, K273, and K277. D246 contacts L-methionine. K277 serves as a coordination point for L-methionine.

Belongs to the AdoMet synthase family. In terms of assembly, homotetramer. It depends on Mn(2+) as a cofactor. Requires Mg(2+) as cofactor. Co(2+) is required as a cofactor. K(+) serves as cofactor.

Its subcellular location is the cytoplasm. It catalyses the reaction L-methionine + ATP + H2O = S-adenosyl-L-methionine + phosphate + diphosphate. The protein operates within amino-acid biosynthesis; S-adenosyl-L-methionine biosynthesis; S-adenosyl-L-methionine from L-methionine: step 1/1. Its function is as follows. Catalyzes the formation of S-adenosylmethionine from methionine and ATP. The reaction comprises two steps that are both catalyzed by the same enzyme: formation of S-adenosylmethionine (AdoMet) and triphosphate, and subsequent hydrolysis of the triphosphate. The protein is S-adenosylmethionine synthase 2 (SAM2) of Petunia hybrida (Petunia).